Consider the following 254-residue polypeptide: Ribonuclease HII (254 aa).

The RNase H type-2 domain occupies 70–254; sequence QAIAGIDEVG…TFEPIKSMYE (185 aa). A divalent metal cation is bound by residues D76, E77, and D168.

It belongs to the RNase HII family. Requires Mn(2+) as cofactor. Mg(2+) is required as a cofactor.

It localises to the cytoplasm. It carries out the reaction Endonucleolytic cleavage to 5'-phosphomonoester.. Its function is as follows. Endonuclease that specifically degrades the RNA of RNA-DNA hybrids. This is Ribonuclease HII from Streptococcus sanguinis (strain SK36).